A 324-amino-acid polypeptide reads, in one-letter code: MAEVNIIYVTVFILKGITNRPELQAPCFGVFLVIYLVTVLGNLGLITLIKIDTRLHTPMYYFLSHLAFVDLCYSSAITPKMMVNFVVERNTIPFHACATQLGCFLTFMITECFLLASMAYDCYVAICSPLHYSTLMSRRVCIQLVAVPYIYSFLVALFHTVITFRLTYCGPNLINHFYCDDLPFLALSCSDTHMKEILIFAFAGFDMISSSSIVLTSYIFIIAAILRIRSTQGQHKAISTCGSHMVTVTIFYGTLIFMYLQPKSNHSLDTDKMASVFYTVVIPMLNPLIYSLRNKEVKDASKKALDKGCENLQILTFLKIRKLY.

Residues Met-1–Ala-25 lie on the Extracellular side of the membrane. The helical transmembrane segment at Pro-26–Ile-46 threads the bilayer. Topologically, residues Thr-47–Arg-54 are cytoplasmic. Residues Leu-55–Ser-75 traverse the membrane as a helical segment. Over Ala-76–Thr-99 the chain is Extracellular. Cys-97 and Cys-189 are oxidised to a cystine. A helical transmembrane segment spans residues Gln-100 to Tyr-120. The Cytoplasmic segment spans residues Asp-121 to Arg-139. The helical transmembrane segment at Val-140–Thr-160 threads the bilayer. The Extracellular portion of the chain corresponds to Val-161–Glu-196. The helical transmembrane segment at Ile-197 to Ser-217 threads the bilayer. Topologically, residues Tyr-218–Ala-237 are cytoplasmic. The chain crosses the membrane as a helical span at residues Ile-238 to Met-258. Topologically, residues Tyr-259–Asp-271 are extracellular. Asn-265 carries an N-linked (GlcNAc...) asparagine glycan. The helical transmembrane segment at Lys-272 to Leu-292 threads the bilayer. Over Arg-293–Tyr-324 the chain is Cytoplasmic.

This sequence belongs to the G-protein coupled receptor 1 family.

The protein resides in the cell membrane. In terms of biological role, odorant receptor. The polypeptide is Olfactory receptor 8U3 (Homo sapiens (Human)).